The following is a 618-amino-acid chain: MSSIQPVGSSGPSSNINSPTLPPGTAPFFSGTVTGQNARSSPAPPSNASVQTDGTRSKRNKRDSRKKREAKGLDQESIPPKKKAAVAPNSALPSSDISILRPLLLAEPRASDLLPPQPRQLSFVSRKTSDVLGQSWDFYEVVDKLTNKNGFRYSYAIADPGFPHIKYRQTDVPPYHARFSFEDSPAAIFFSEDARAVTASSAWHTARANVCAREGAYYYEARVINGIPNNSQSISANESSHRTPKGHVRLGFARREADLDANVGVDCYGYGIRDVNGEVVNRMRCEYFFPKGESIREGDVIGMLITLPPLSLHKKVVEGTYDPAVDGDGTSPTSEAHTSTNLIRDRIPFHYKSDFCWQQSNVFSTKHLRDYAFNLKETPTFGPPSPFNSEDPSLRTLPGSSITIFKNGEKMGTPFKELYAFLPPASRLANGTNNLGIGERENADDGMIGYYPAVSCYGGGAVECRFEGPWWVGPPSHADNGEPVRGIGERFNEQIVEDVVADIVDEVEAMLIWGGVDGDVVGNAEVDSAGAGAVGGSEVLKGGVGAAFDPRLDSVPGAAEFADTENISNGLEAGVTDADAGHLTTEDTLSVGHEGSPNPATPSAPLENTVPTEDVEMS.

Residues 1–91 (MSSIQPVGSS…KKAAVAPNSA (91 aa)) are disordered. Composition is skewed to low complexity over residues 8 to 19 (GSSGPSSNINSP) and 37 to 49 (NARS…SNAS). Basic residues predominate over residues 57–69 (SKRNKRDSRKKRE). Residues 157–368 (IADPGFPHIK…QSNVFSTKHL (212 aa)) form the B30.2/SPRY domain. The interval 588–618 (TLSVGHEGSPNPATPSAPLENTVPTEDVEMS) is disordered.

It belongs to the cclA family. In terms of assembly, component of the COMPASS complex.

It localises to the nucleus. The protein localises to the chromosome. It is found in the telomere. Functionally, component of the COMPASS (Set1C) complex that specifically mono-, di- and trimethylates histone H3 to form H3K4me1/2/3, which subsequently plays a role in telomere length maintenance and transcription elongation regulation. Controls the production of several secondary metabolites, including gliotoxin, but does not contribute to pathogenicity. The chain is COMPASS component cclA from Aspergillus fumigatus (strain ATCC MYA-4609 / CBS 101355 / FGSC A1100 / Af293) (Neosartorya fumigata).